Reading from the N-terminus, the 165-residue chain is Small ribosomal subunit protein bS16 (165 aa).

The segment at 110–165 (LSEANNGPTAEAITEKKKKAREDKEAKEAAEKAAAEKAAAAESEEAPAEEAAAEEA) is disordered. Positions 129–144 (AREDKEAKEAAEKAAA) are enriched in basic and acidic residues. The span at 151–165 (ESEEAPAEEAAAEEA) shows a compositional bias: acidic residues.

Belongs to the bacterial ribosomal protein bS16 family.

This chain is Small ribosomal subunit protein bS16, found in Corynebacterium glutamicum (strain R).